Reading from the N-terminus, the 90-residue chain is DNA-directed RNA polymerase subunit omega (90 aa).

The protein belongs to the RNA polymerase subunit omega family. As to quaternary structure, the RNAP catalytic core consists of 2 alpha, 1 beta, 1 beta' and 1 omega subunit. When a sigma factor is associated with the core the holoenzyme is formed, which can initiate transcription.

It carries out the reaction RNA(n) + a ribonucleoside 5'-triphosphate = RNA(n+1) + diphosphate. In terms of biological role, promotes RNA polymerase assembly. Latches the N- and C-terminal regions of the beta' subunit thereby facilitating its interaction with the beta and alpha subunits. This is DNA-directed RNA polymerase subunit omega from Beutenbergia cavernae (strain ATCC BAA-8 / DSM 12333 / CCUG 43141 / JCM 11478 / NBRC 16432 / NCIMB 13614 / HKI 0122).